A 246-amino-acid polypeptide reads, in one-letter code: Large ribosomal subunit protein uL2 (246 aa).

Positions 197–226 (SPYAHPHGGGSHPKGGTPVPKTAPPGQKVG) are disordered.

The protein belongs to the universal ribosomal protein uL2 family. Part of the 50S ribosomal subunit. Forms a bridge to the 30S subunit in the 70S ribosome.

Functionally, one of the primary rRNA binding proteins. Required for association of the 30S and 50S subunits to form the 70S ribosome, for tRNA binding and peptide bond formation. It has been suggested to have peptidyltransferase activity; this is somewhat controversial. Makes several contacts with the 16S rRNA in the 70S ribosome. The chain is Large ribosomal subunit protein uL2 from Pyrobaculum islandicum (strain DSM 4184 / JCM 9189 / GEO3).